The chain runs to 463 residues: DDB1- and CUL4-associated factor 12-like protein 1 (463 aa).

Residues 1–35 are disordered; that stretch reads MAQQQTGSRKRKAPAVEADAESSPSQGLAAADGEG. WD repeat units lie at residues 87–137, 138–184, 185–252, 253–297, 298–341, and 342–376; these read LTER…PLLR, DSEA…SLDP, LCLG…DVEA, IPRA…ALSR, LLSI…QQNI, and RPLC…LFYD.

This sequence belongs to the WD repeat DCAF12 family.

In Homo sapiens (Human), this protein is DDB1- and CUL4-associated factor 12-like protein 1 (DCAF12L1).